We begin with the raw amino-acid sequence, 162 residues long: Shikimate kinase (162 aa).

11–16 (GSGKSS) contacts ATP. Residue Ser-15 participates in Mg(2+) binding. Substrate contacts are provided by Asp-33, Arg-57, and Gly-80. Arg-116 contacts ATP. Arg-132 lines the substrate pocket.

Belongs to the shikimate kinase family. As to quaternary structure, monomer. The cofactor is Mg(2+).

It localises to the cytoplasm. The enzyme catalyses shikimate + ATP = 3-phosphoshikimate + ADP + H(+). It functions in the pathway metabolic intermediate biosynthesis; chorismate biosynthesis; chorismate from D-erythrose 4-phosphate and phosphoenolpyruvate: step 5/7. Functionally, catalyzes the specific phosphorylation of the 3-hydroxyl group of shikimic acid using ATP as a cosubstrate. This is Shikimate kinase from Helicobacter pylori (strain J99 / ATCC 700824) (Campylobacter pylori J99).